Reading from the N-terminus, the 122-residue chain is Large ribosomal subunit protein uL14c (122 aa).

The protein belongs to the universal ribosomal protein uL14 family. Part of the 50S ribosomal subunit.

It is found in the plastid. The protein localises to the chloroplast. Functionally, binds to 23S rRNA. In Lactuca sativa (Garden lettuce), this protein is Large ribosomal subunit protein uL14c.